Here is a 201-residue protein sequence, read N- to C-terminus: UPF0637 protein LCA_0842 (201 aa).

The protein belongs to the UPF0637 family.

This Latilactobacillus sakei subsp. sakei (strain 23K) (Lactobacillus sakei subsp. sakei) protein is UPF0637 protein LCA_0842.